The sequence spans 304 residues: Cyclin-dependent kinase 3 (304 aa).

The Protein kinase domain maps to 4 to 286 (FQKVEKIGEG…AKTALAHPYF (283 aa)). ATP is bound by residues 10 to 18 (IGEGTYGVV) and lysine 33. Aspartate 127 functions as the Proton acceptor in the catalytic mechanism.

This sequence belongs to the protein kinase superfamily. CMGC Ser/Thr protein kinase family. CDC2/CDKX subfamily. As to quaternary structure, interacts with CABLES1 and ATF1. Binding to CCNC/cyclin-C promotes RB1 phosphorylation. Binds to CABLES2.

It catalyses the reaction L-seryl-[protein] + ATP = O-phospho-L-seryl-[protein] + ADP + H(+). The enzyme catalyses L-threonyl-[protein] + ATP = O-phospho-L-threonyl-[protein] + ADP + H(+). In terms of biological role, serine/threonine-protein kinase that plays a critical role in the control of the eukaryotic cell cycle; involved in G0-G1 and G1-S cell cycle transitions. Interacts with CCNC/cyclin-C during interphase. Phosphorylates histone H1, ATF1, RB1 and CABLES1. ATF1 phosphorylation triggers ATF1 transactivation and transcriptional activities, and promotes cell proliferation and transformation. CDK3/cyclin-C mediated RB1 phosphorylation is required for G0-G1 transition. Promotes G1-S transition probably by contributing to the activation of E2F1, E2F2 and E2F3 in a RB1-independent manner. This Mus musculus (Mouse) protein is Cyclin-dependent kinase 3 (Cdk3).